Here is a 54-residue protein sequence, read N- to C-terminus: uncharacterized protein (54 aa).

This is an uncharacterized protein from Bacillus subtilis (strain 168).